The following is a 130-amino-acid chain: Small ribosomal subunit protein uS8A (130 aa).

The protein belongs to the universal ribosomal protein uS8 family. In terms of assembly, component of the small ribosomal subunit (SSU). Mature yeast ribosomes consist of a small (40S) and a large (60S) subunit. The 40S small subunit contains 1 molecule of ribosomal RNA (18S rRNA) and at least 33 different proteins. The large 60S subunit contains 3 rRNA molecules (25S, 5.8S and 5S rRNA) and at least 46 different proteins.

The protein localises to the cytoplasm. The protein resides in the nucleus. In terms of biological role, component of the ribosome, a large ribonucleoprotein complex responsible for the synthesis of proteins in the cell. The small ribosomal subunit (SSU) binds messenger RNAs (mRNAs) and translates the encoded message by selecting cognate aminoacyl-transfer RNA (tRNA) molecules. The large subunit (LSU) contains the ribosomal catalytic site termed the peptidyl transferase center (PTC), which catalyzes the formation of peptide bonds, thereby polymerizing the amino acids delivered by tRNAs into a polypeptide chain. The nascent polypeptides leave the ribosome through a tunnel in the LSU and interact with protein factors that function in enzymatic processing, targeting, and the membrane insertion of nascent chains at the exit of the ribosomal tunnel. This chain is Small ribosomal subunit protein uS8A (rps2201), found in Schizosaccharomyces pombe (strain 972 / ATCC 24843) (Fission yeast).